A 538-amino-acid chain; its full sequence is Putative cysteine ligase BshC (538 aa).

The stretch at 460-484 (KINEQIELLERMLKRNVEKKHEVEL) forms a coiled coil.

Belongs to the BshC family.

In terms of biological role, involved in bacillithiol (BSH) biosynthesis. May catalyze the last step of the pathway, the addition of cysteine to glucosamine malate (GlcN-Mal) to generate BSH. In Bacillus anthracis (strain A0248), this protein is Putative cysteine ligase BshC.